The sequence spans 471 residues: 3-isopropylmalate dehydratase large subunit (471 aa).

[4Fe-4S] cluster-binding residues include Cys-351, Cys-412, and Cys-415.

This sequence belongs to the aconitase/IPM isomerase family. LeuC type 1 subfamily. In terms of assembly, heterodimer of LeuC and LeuD. [4Fe-4S] cluster serves as cofactor.

The enzyme catalyses (2R,3S)-3-isopropylmalate = (2S)-2-isopropylmalate. It participates in amino-acid biosynthesis; L-leucine biosynthesis; L-leucine from 3-methyl-2-oxobutanoate: step 2/4. Catalyzes the isomerization between 2-isopropylmalate and 3-isopropylmalate, via the formation of 2-isopropylmaleate. The sequence is that of 3-isopropylmalate dehydratase large subunit from Hahella chejuensis (strain KCTC 2396).